The following is a 165-amino-acid chain: Ribosome maturation factor RimM (165 aa).

The 72-residue stretch at Glu94–Val165 folds into the PRC barrel domain.

Belongs to the RimM family. In terms of assembly, binds ribosomal protein uS19.

Its subcellular location is the cytoplasm. Functionally, an accessory protein needed during the final step in the assembly of 30S ribosomal subunit, possibly for assembly of the head region. Essential for efficient processing of 16S rRNA. May be needed both before and after RbfA during the maturation of 16S rRNA. It has affinity for free ribosomal 30S subunits but not for 70S ribosomes. In Rickettsia typhi (strain ATCC VR-144 / Wilmington), this protein is Ribosome maturation factor RimM.